We begin with the raw amino-acid sequence, 260 residues long: Ubiquinone/menaquinone biosynthesis C-methyltransferase UbiE (260 aa).

S-adenosyl-L-methionine-binding positions include Thr83, Asp104, and Asn132 to Ala133.

Belongs to the class I-like SAM-binding methyltransferase superfamily. MenG/UbiE family.

The enzyme catalyses a 2-demethylmenaquinol + S-adenosyl-L-methionine = a menaquinol + S-adenosyl-L-homocysteine + H(+). The catalysed reaction is a 2-methoxy-6-(all-trans-polyprenyl)benzene-1,4-diol + S-adenosyl-L-methionine = a 5-methoxy-2-methyl-3-(all-trans-polyprenyl)benzene-1,4-diol + S-adenosyl-L-homocysteine + H(+). Its pathway is quinol/quinone metabolism; menaquinone biosynthesis; menaquinol from 1,4-dihydroxy-2-naphthoate: step 2/2. The protein operates within cofactor biosynthesis; ubiquinone biosynthesis. Functionally, methyltransferase required for the conversion of demethylmenaquinol (DMKH2) to menaquinol (MKH2) and the conversion of 2-polyprenyl-6-methoxy-1,4-benzoquinol (DDMQH2) to 2-polyprenyl-3-methyl-6-methoxy-1,4-benzoquinol (DMQH2). This Bartonella quintana (strain Toulouse) (Rochalimaea quintana) protein is Ubiquinone/menaquinone biosynthesis C-methyltransferase UbiE.